The chain runs to 695 residues: Transketolase (695 aa).

A substrate-binding site is contributed by histidine 37. Thiamine diphosphate is bound by residues histidine 77 and glycine 126–leucine 128. Aspartate 164 is a Mg(2+) binding site. Thiamine diphosphate-binding residues include glycine 165 and asparagine 194. Mg(2+) is bound by residues asparagine 194 and isoleucine 196. Histidine 268, arginine 361, and serine 388 together coordinate substrate. Residue histidine 268 coordinates thiamine diphosphate. The Proton donor role is filled by glutamate 415. Phenylalanine 441 is a binding site for thiamine diphosphate. 3 residues coordinate substrate: histidine 465, aspartate 473, and arginine 524.

The protein belongs to the transketolase family. In terms of assembly, homodimer. Mg(2+) serves as cofactor. Ca(2+) is required as a cofactor. The cofactor is Mn(2+). It depends on Co(2+) as a cofactor. Requires thiamine diphosphate as cofactor.

It carries out the reaction D-sedoheptulose 7-phosphate + D-glyceraldehyde 3-phosphate = aldehydo-D-ribose 5-phosphate + D-xylulose 5-phosphate. The protein operates within carbohydrate biosynthesis; Calvin cycle. Catalyzes the transfer of a two-carbon ketol group from a ketose donor to an aldose acceptor, via a covalent intermediate with the cofactor thiamine pyrophosphate. The chain is Transketolase (cbbT) from Sinorhizobium medicae (strain WSM419) (Ensifer medicae).